Here is a 411-residue protein sequence, read N- to C-terminus: Phosphoglycerate kinase (411 aa).

The tract at residues 1–24 is disordered; that stretch reads MTGLCPLHQPSPLDHPHSGGTPMQ. Substrate-binding positions include 41 to 43, R56, 79 to 82, R139, and R172; these read DYN and HFGR. ATP is bound by residues K222, G310, E341, and 369-372; that span reads GGDS.

It belongs to the phosphoglycerate kinase family. As to quaternary structure, monomer.

It localises to the cytoplasm. The catalysed reaction is (2R)-3-phosphoglycerate + ATP = (2R)-3-phospho-glyceroyl phosphate + ADP. Its pathway is carbohydrate degradation; glycolysis; pyruvate from D-glyceraldehyde 3-phosphate: step 2/5. The sequence is that of Phosphoglycerate kinase from Deinococcus radiodurans (strain ATCC 13939 / DSM 20539 / JCM 16871 / CCUG 27074 / LMG 4051 / NBRC 15346 / NCIMB 9279 / VKM B-1422 / R1).